We begin with the raw amino-acid sequence, 152 residues long: UPF0178 protein YaiI (152 aa).

The protein belongs to the UPF0178 family.

The sequence is that of UPF0178 protein YaiI from Escherichia coli O81 (strain ED1a).